A 464-amino-acid polypeptide reads, in one-letter code: F-box/FBD/LRR-repeat protein At1g80470 (464 aa).

The F-box domain occupies 15–62 (DWISGLADDLLLQILSKVPTRESVFTSRMSKRWRNLWRHVPALDLDSS). LRR repeat units follow at residues 96-122 (EEHCDPEFVSRIDHVVKRGLKDLTILS), 123-150 (KVNIEDDSVRMPVSLYSCATLVNLTLYS), 152-178 (VFDAPRAQLVSLPCLKTMHLEAVKFDG), 197-222 (IITHDHDELGDVSVRSPSLRRFKLES), 223-249 (MREDYDECEDPNVEVDTPGLEYMSITD), and 273-298 (DAEDEDSVIHDFITAISTVRELTISA). In terms of domain architecture, FBD spans 359 to 413 (KEEINLSLVPHCFESSLEYVQLKVPITVSETSSKMELAIYFVRNCSVLKKLMLNE).

The sequence is that of F-box/FBD/LRR-repeat protein At1g80470 from Arabidopsis thaliana (Mouse-ear cress).